Here is a 359-residue protein sequence, read N- to C-terminus: Peptide chain release factor 1 (359 aa).

Q236 is subject to N5-methylglutamine. The segment at 288-307 is disordered; sequence QDEQDAERKSTIGTGDRSER. Positions 293-307 are enriched in basic and acidic residues; the sequence is AERKSTIGTGDRSER.

Belongs to the prokaryotic/mitochondrial release factor family. Methylated by PrmC. Methylation increases the termination efficiency of RF1.

The protein localises to the cytoplasm. In terms of biological role, peptide chain release factor 1 directs the termination of translation in response to the peptide chain termination codons UAG and UAA. The polypeptide is Peptide chain release factor 1 (Streptococcus sanguinis (strain SK36)).